Reading from the N-terminus, the 411-residue chain is Mitotic apparatus protein p62 (411 aa).

3 stretches are compositionally biased toward acidic residues: residues 134-156 (AYEVGDEDLEDEDEGEEDEEEEE), 183-201 (ELDEDEDDDEEEEEEEEEI), and 246-321 (DDDE…EEDS). The disordered stretch occupies residues 134 to 378 (AYEVGDEDLE…KSPSKPKKEE (245 aa)). Positions 351-367 (GMKEKKTYSLEDMKQDL) are enriched in basic and acidic residues.

Belongs to the nucleoplasmin family. Post-translationally, phosphorylated by CaM-kinase II in vitro.

The protein localises to the nucleus. Functionally, required for mitotic progression. Binds to chromatin. This is Mitotic apparatus protein p62 from Lytechinus pictus (Painted sea urchin).